The following is a 175-amino-acid chain: Alpha-crystallin B chain (175 aa).

Met-1 carries the post-translational modification N-acetylmethionine. Ser-19, Ser-45, and Ser-59 each carry phosphoserine. The sHSP domain occupies 56 to 164; sequence RAPSWIDTGL…PERTIPITRE (109 aa). A Zn(2+)-binding site is contributed by His-83. Position 92 is an N6-acetyllysine (Lys-92). Zn(2+)-binding residues include His-104, Glu-106, His-111, and His-119. The interval 145-175 is disordered; the sequence is VNGPRKQASGPERTIPITREEKPAVTAAPKK. Lys-166 is subject to N6-acetyllysine. The O-linked (GlcNAc) threonine glycan is linked to Thr-170.

The protein belongs to the small heat shock protein (HSP20) family. Heteromer composed of three CRYAA and one CRYAB subunits. Aggregates with homologous proteins, including the small heat shock protein HSPB1, to form large heteromeric complexes. Inter-subunit bridging via zinc ions enhances stability, which is crucial as there is no protein turn over in the lens. Interacts with HSPBAP1 and TTN/titin. Interacts with TMEM109; in the cellular response to DNA damage. Interacts with DES; binds rapidly during early stages of DES filament assembly and a reduced binding seen in the later stages. Interacts with TMED10; the interaction mediates the translocation from the cytoplasm into the ERGIC (endoplasmic reticulum-Golgi intermediate compartment) and thereby secretion. Interacts with ATP6V1A and with MTOR, forming a ternary complex. As to expression, lens as well as other tissues.

Its subcellular location is the cytoplasm. It is found in the nucleus. The protein resides in the secreted. It localises to the lysosome. Functionally, may contribute to the transparency and refractive index of the lens. Has chaperone-like activity, preventing aggregation of various proteins under a wide range of stress conditions. In lens epithelial cells, stabilizes the ATP6V1A protein, preventing its degradation by the proteasome. This chain is Alpha-crystallin B chain (CRYAB), found in Mesocricetus auratus (Golden hamster).